The chain runs to 638 residues: Zinc finger protein 143 (638 aa).

An N-acetylmethionine modification is found at Met1. Residue Lys213 forms a Glycyl lysine isopeptide (Lys-Gly) (interchain with G-Cter in SUMO2) linkage. 4 C2H2-type zinc fingers span residues 237-261, 267-291, 297-321, and 327-351; these read FRCK…ERSH, YQCE…FRTH, YRCS…IRTH, and FKCP…IRTH. Residue Thr352 is modified to Phosphothreonine. 3 C2H2-type zinc fingers span residues 357–381, 387–411, and 417–440; these read YYCT…VRIH, YVCT…HVVH, and YNCN…RTAH. A Glycyl lysine isopeptide (Lys-Gly) (interchain with G-Cter in SUMO2) cross-link involves residue Lys406.

This sequence belongs to the GLI C2H2-type zinc-finger protein family. As to quaternary structure, interacts with CHD8. Forms a complex with HCFC1 and ZNF143.

The protein localises to the nucleus. Transcriptional activator. In complex with HCFC1 and ZNF143, regulates the expression of several genes, including AP2S1, ESCO2, OPHN1, RBL1, UBXN8 and ZNF32. Activates the gene for selenocysteine tRNA (tRNAsec). Binds to the SPH motif of small nuclear RNA (snRNA) gene promoters. Participates in efficient U6 RNA polymerase III transcription via its interaction with CHD8. The chain is Zinc finger protein 143 (Znf143) from Rattus norvegicus (Rat).